Consider the following 515-residue polypeptide: 2-isopropylmalate synthase (515 aa).

A Pyruvate carboxyltransferase domain is found at 5–268 (VIIFDTTLRD…VCGIDATQIV (264 aa)). Mn(2+)-binding residues include Asp14, His202, His204, and Asn239. The tract at residues 394–515 (KFISLSQHSE…QAKLNAQMTP (122 aa)) is regulatory domain.

It belongs to the alpha-IPM synthase/homocitrate synthase family. LeuA type 1 subfamily. Homodimer. The cofactor is Mn(2+).

The protein resides in the cytoplasm. The catalysed reaction is 3-methyl-2-oxobutanoate + acetyl-CoA + H2O = (2S)-2-isopropylmalate + CoA + H(+). It functions in the pathway amino-acid biosynthesis; L-leucine biosynthesis; L-leucine from 3-methyl-2-oxobutanoate: step 1/4. Catalyzes the condensation of the acetyl group of acetyl-CoA with 3-methyl-2-oxobutanoate (2-ketoisovalerate) to form 3-carboxy-3-hydroxy-4-methylpentanoate (2-isopropylmalate). This chain is 2-isopropylmalate synthase, found in Polynucleobacter necessarius subsp. necessarius (strain STIR1).